Consider the following 368-residue polypeptide: Ethanol acetyltransferase 1 (368 aa).

A mitochondrion-targeting transit peptide spans 1–21 (MFLSLRPSLSVSRLAVVRRAY). In terms of domain architecture, AB hydrolase-1 spans 67 to 171 (PIIFFHGLLG…IIDNAPEPQP (105 aa)). Catalysis depends on charge relay system residues S140, D164, and H315. The tract at residues 344–368 (RNKDPNNYMQTQNSISNSDTMGQSL) is disordered. The span at 348 to 368 (PNNYMQTQNSISNSDTMGQSL) shows a compositional bias: polar residues.

Belongs to the AB hydrolase superfamily.

It localises to the mitochondrion. The catalysed reaction is ethanol + acetyl-CoA = ethyl acetate + CoA. It carries out the reaction acetyl-CoA + H2O = acetate + CoA + H(+). It catalyses the reaction ethyl acetate + H2O = ethanol + acetate + H(+). Alcohol acetyltransferase that catalyzes the synthesis of ethyl acetate from ethanol and acetyl-CoA. Can also function as a thioesterase by hydrolyzing acetyl-CoA in the absence of ethanol, as well as esterase hydrolyzing ethyl acetate. The chain is Ethanol acetyltransferase 1 (EAT1) from Kluyveromyces lactis (strain ATCC 8585 / CBS 2359 / DSM 70799 / NBRC 1267 / NRRL Y-1140 / WM37) (Yeast).